A 361-amino-acid chain; its full sequence is Ribosomal RNA large subunit methyltransferase M (361 aa).

S-adenosyl-L-methionine is bound by residues serine 187, 220–223 (CPGG), aspartate 239, aspartate 259, and aspartate 276. Catalysis depends on lysine 305, which acts as the Proton acceptor.

The protein belongs to the class I-like SAM-binding methyltransferase superfamily. RNA methyltransferase RlmE family. RlmM subfamily. Monomer.

It is found in the cytoplasm. It carries out the reaction cytidine(2498) in 23S rRNA + S-adenosyl-L-methionine = 2'-O-methylcytidine(2498) in 23S rRNA + S-adenosyl-L-homocysteine + H(+). Catalyzes the 2'-O-methylation at nucleotide C2498 in 23S rRNA. The polypeptide is Ribosomal RNA large subunit methyltransferase M (Shewanella sp. (strain W3-18-1)).